The following is a 150-amino-acid chain: Large ribosomal subunit protein bL9 (150 aa).

The protein belongs to the bacterial ribosomal protein bL9 family.

Binds to the 23S rRNA. In Pectobacterium atrosepticum (strain SCRI 1043 / ATCC BAA-672) (Erwinia carotovora subsp. atroseptica), this protein is Large ribosomal subunit protein bL9.